A 101-amino-acid chain; its full sequence is Large ribosomal subunit protein uL23 (101 aa).

Belongs to the universal ribosomal protein uL23 family. Part of the 50S ribosomal subunit. Contacts protein L29, and trigger factor when it is bound to the ribosome.

Functionally, one of the early assembly proteins it binds 23S rRNA. One of the proteins that surrounds the polypeptide exit tunnel on the outside of the ribosome. Forms the main docking site for trigger factor binding to the ribosome. The chain is Large ribosomal subunit protein uL23 from Leptospira biflexa serovar Patoc (strain Patoc 1 / Ames).